Reading from the N-terminus, the 99-residue chain is Aspartyl/glutamyl-tRNA(Asn/Gln) amidotransferase subunit C (99 aa).

The protein belongs to the GatC family. In terms of assembly, heterotrimer of A, B and C subunits.

It catalyses the reaction L-glutamyl-tRNA(Gln) + L-glutamine + ATP + H2O = L-glutaminyl-tRNA(Gln) + L-glutamate + ADP + phosphate + H(+). The enzyme catalyses L-aspartyl-tRNA(Asn) + L-glutamine + ATP + H2O = L-asparaginyl-tRNA(Asn) + L-glutamate + ADP + phosphate + 2 H(+). Its function is as follows. Allows the formation of correctly charged Asn-tRNA(Asn) or Gln-tRNA(Gln) through the transamidation of misacylated Asp-tRNA(Asn) or Glu-tRNA(Gln) in organisms which lack either or both of asparaginyl-tRNA or glutaminyl-tRNA synthetases. The reaction takes place in the presence of glutamine and ATP through an activated phospho-Asp-tRNA(Asn) or phospho-Glu-tRNA(Gln). This chain is Aspartyl/glutamyl-tRNA(Asn/Gln) amidotransferase subunit C, found in Macrococcus caseolyticus (strain JCSC5402) (Macrococcoides caseolyticum).